The chain runs to 497 residues: Signal recognition particle receptor FtsY (497 aa).

Disordered regions lie at residues 1–63 (MAKE…TEAE) and 79–130 (AESE…EWQA). A compositionally biased stretch (low complexity) spans 87–96 (EAEVVAQPEP). Residues 300–307 (GVNGVGKT), 382–386 (DTAGR), and 446–449 (TKLD) each bind GTP.

This sequence belongs to the GTP-binding SRP family. FtsY subfamily. In terms of assembly, part of the signal recognition particle protein translocation system, which is composed of SRP and FtsY. SRP is a ribonucleoprotein composed of Ffh and a 4.5S RNA molecule. Binds to SecY. Post-translationally, proteolytically cleaved. The cleavage may regulate function and subcellular location of FtsY. Full-length FtsY is found primarily associated with the membrane, while cleaved protein is predominantly present in the cytoplasm.

It is found in the cell inner membrane. It localises to the cytoplasm. It catalyses the reaction GTP + H2O = GDP + phosphate + H(+). Its activity is regulated as follows. Conformation of the Ffh-FtsY complex and regulation of its GTPase activity are modulated by the 4.5S RNA. Formation of the FfH-FtsY complex leads to a mutual stimulation of both GTPases. Its function is as follows. Involved in targeting and insertion of nascent membrane proteins into the cytoplasmic membrane. Acts as a receptor for the complex formed by the signal recognition particle (SRP) and the ribosome-nascent chain (RNC). Interaction with SRP-RNC leads to the transfer of the RNC complex to the Sec translocase for insertion into the membrane, the hydrolysis of GTP by both Ffh and FtsY, and the dissociation of the SRP-FtsY complex into the individual components. The chain is Signal recognition particle receptor FtsY from Escherichia coli (strain K12).